We begin with the raw amino-acid sequence, 114 residues long: Ribonuclease P protein component (114 aa).

It belongs to the RnpA family. As to quaternary structure, consists of a catalytic RNA component (M1 or rnpB) and a protein subunit.

It catalyses the reaction Endonucleolytic cleavage of RNA, removing 5'-extranucleotides from tRNA precursor.. Functionally, RNaseP catalyzes the removal of the 5'-leader sequence from pre-tRNA to produce the mature 5'-terminus. It can also cleave other RNA substrates such as 4.5S RNA. The protein component plays an auxiliary but essential role in vivo by binding to the 5'-leader sequence and broadening the substrate specificity of the ribozyme. This is Ribonuclease P protein component from Buchnera aphidicola subsp. Schizaphis graminum (strain Sg).